The chain runs to 354 residues: Histidinol-phosphate aminotransferase (354 aa).

The residue at position 210 (Lys-210) is an N6-(pyridoxal phosphate)lysine.

The protein belongs to the class-II pyridoxal-phosphate-dependent aminotransferase family. Histidinol-phosphate aminotransferase subfamily. In terms of assembly, homodimer. It depends on pyridoxal 5'-phosphate as a cofactor.

The enzyme catalyses L-histidinol phosphate + 2-oxoglutarate = 3-(imidazol-4-yl)-2-oxopropyl phosphate + L-glutamate. The protein operates within amino-acid biosynthesis; L-histidine biosynthesis; L-histidine from 5-phospho-alpha-D-ribose 1-diphosphate: step 7/9. The protein is Histidinol-phosphate aminotransferase of Clostridium botulinum (strain ATCC 19397 / Type A).